Reading from the N-terminus, the 311-residue chain is tRNA dimethylallyltransferase (311 aa).

13–20 (GPTASGKT) lines the ATP pocket. Position 15–20 (15–20 (TASGKT)) interacts with substrate. Interaction with substrate tRNA regions lie at residues 38–41 (DSMQ) and 166–170 (QRVLR).

Belongs to the IPP transferase family. As to quaternary structure, monomer. Mg(2+) serves as cofactor.

The enzyme catalyses adenosine(37) in tRNA + dimethylallyl diphosphate = N(6)-dimethylallyladenosine(37) in tRNA + diphosphate. Catalyzes the transfer of a dimethylallyl group onto the adenine at position 37 in tRNAs that read codons beginning with uridine, leading to the formation of N6-(dimethylallyl)adenosine (i(6)A). This Staphylococcus aureus (strain Mu3 / ATCC 700698) protein is tRNA dimethylallyltransferase.